A 224-amino-acid chain; its full sequence is MSYIDYLAYTGNTTFYDRFDGDLTSEHRIKCIINGCLINIMFSIRTIKEFPEEIKICQAAVSKFLTCGYVNDYLIEKYPPFYLWHKRFCDYDIYKMLMEKHPKLNYTVAKAAIMQRYNDLYFSFDFQPEEELIMTAALTENTEIYEDQINKAKKLGYCYSYLDYDNYCIKEEPGIEEIPDIEPKFNPFYVYVESGSKMEDVEYAVVNLVEEFKYLQMVYDMSKI.

Functionally, the presence of the two linear plasmids, termed pGKL1 and pGKL2, in strains of Kluyveromyces lactis confers the killer phenotype to the host cell, by promoting the secretion of a toxin able to inhibit the growth of sensitive strains. This is an uncharacterized protein from Kluyveromyces lactis (strain ATCC 8585 / CBS 2359 / DSM 70799 / NBRC 1267 / NRRL Y-1140 / WM37) (Yeast).